Reading from the N-terminus, the 53-residue chain is Tryptophan RNA-binding attenuator protein inhibitory protein (53 aa).

CXXCXGXG motif repeat units follow at residues 12-19 (CPKCERAG) and 26-33 (CPACSGKG).

As to quaternary structure, homopentamer or homohexamer.

It localises to the cytoplasm. In terms of biological role, by forming a complex with tryptophan-activated TRAP, and masking its RNA binding site, it inhibits TRAP's RNA binding ability, thereby abolishing TRAP regulation of gene expression, leading to antitermination and increased trp operon expression. AT acts by competing with messenger RNA for the RNA binding domain of TRAP. This Bacillus subtilis (strain 168) protein is Tryptophan RNA-binding attenuator protein inhibitory protein (rtpA).